A 199-amino-acid chain; its full sequence is NADH-quinone oxidoreductase subunit C (199 aa).

Belongs to the complex I 30 kDa subunit family. As to quaternary structure, NDH-1 is composed of 14 different subunits. Subunits NuoB, C, D, E, F, and G constitute the peripheral sector of the complex.

The protein localises to the cell inner membrane. It catalyses the reaction a quinone + NADH + 5 H(+)(in) = a quinol + NAD(+) + 4 H(+)(out). NDH-1 shuttles electrons from NADH, via FMN and iron-sulfur (Fe-S) centers, to quinones in the respiratory chain. The immediate electron acceptor for the enzyme in this species is believed to be ubiquinone. Couples the redox reaction to proton translocation (for every two electrons transferred, four hydrogen ions are translocated across the cytoplasmic membrane), and thus conserves the redox energy in a proton gradient. In Rhodobacter capsulatus (Rhodopseudomonas capsulata), this protein is NADH-quinone oxidoreductase subunit C.